Consider the following 315-residue polypeptide: Olfactory receptor 10A4 (315 aa).

At 1–26 (MMWENWTIVSEFVLVSFSALSTELQA) the chain is on the extracellular side. Asparagine 5 carries an N-linked (GlcNAc...) asparagine glycan. A helical membrane pass occupies residues 27-47 (LLFLLFLTIYLVTLMGNVLII). Topologically, residues 48–55 (LVTIADSA) are cytoplasmic. Residues 56-76 (LQSPMYFFLRNLSFLEIGFNL) form a helical membrane-spanning segment. Residues 77-100 (VIVPKMLGTLIIQDTTISFLGCAT) lie on the Extracellular side of the membrane. A disulfide bond links cysteine 98 and cysteine 190. The helical transmembrane segment at 101-121 (QMYFFFFFGAAECCLLATMAY) threads the bilayer. Over 122 to 140 (DRYVAICDPLHYPVIMGHI) the chain is Cytoplasmic. Residues 141–161 (SCAQLAAASWFSGFSVATVQT) form a helical membrane-spanning segment. Over 162–198 (TWIFSFPFCGPNRVNHFFCDSPPVIALVCADTSVFEL) the chain is Extracellular. The chain crosses the membrane as a helical span at residues 199 to 218 (EALTATVLFILFPFLLILGS). The Cytoplasmic portion of the chain corresponds to 219–238 (YVRILSTIFRMPSAEGKHQA). Residues 239 to 259 (FSTCSAHLLVVSLFYSTAILT) form a helical membrane-spanning segment. Residues 260–272 (YFRPQSSASSESK) lie on the Extracellular side of the membrane. Residues 273–293 (KLLSLSSTVVTPMLNPIIYSS) form a helical membrane-spanning segment. Residues 294–315 (RNKEVKAALKRLIHRTLGSQKL) lie on the Cytoplasmic side of the membrane.

The protein belongs to the G-protein coupled receptor 1 family. Expressed in the tongue.

The protein resides in the cell membrane. In terms of biological role, odorant receptor (Potential). May be involved in taste perception. The polypeptide is Olfactory receptor 10A4 (OR10A4) (Homo sapiens (Human)).